A 449-amino-acid polypeptide reads, in one-letter code: Putative methylthiotransferase MJ0865 (449 aa).

Residues 163–390 (SIRGANVYIE…EGEYRKLGLS (228 aa)) enclose the Radical SAM core domain. [4Fe-4S] cluster-binding residues include C177, C181, and C184.

Belongs to the methylthiotransferase family. [4Fe-4S] cluster serves as cofactor.

This is Putative methylthiotransferase MJ0865 from Methanocaldococcus jannaschii (strain ATCC 43067 / DSM 2661 / JAL-1 / JCM 10045 / NBRC 100440) (Methanococcus jannaschii).